A 273-amino-acid chain; its full sequence is 2,3,4,5-tetrahydropyridine-2,6-dicarboxylate N-succinyltransferase (273 aa).

Residues R104 and D141 each coordinate substrate.

This sequence belongs to the transferase hexapeptide repeat family. In terms of assembly, homotrimer.

The protein resides in the cytoplasm. The enzyme catalyses (S)-2,3,4,5-tetrahydrodipicolinate + succinyl-CoA + H2O = (S)-2-succinylamino-6-oxoheptanedioate + CoA. It functions in the pathway amino-acid biosynthesis; L-lysine biosynthesis via DAP pathway; LL-2,6-diaminopimelate from (S)-tetrahydrodipicolinate (succinylase route): step 1/3. This is 2,3,4,5-tetrahydropyridine-2,6-dicarboxylate N-succinyltransferase from Neisseria meningitidis serogroup A / serotype 4A (strain DSM 15465 / Z2491).